The sequence spans 463 residues: uncharacterized protein (463 aa).

An N-terminal signal peptide occupies residues 1 to 23 (MKFSSIPIASTLLSLLVASSVTA). Disordered regions lie at residues 174 to 200 (STYN…TKAS) and 239 to 258 (GAST…QRKN).

It belongs to the but2 family.

The protein resides in the cytoplasm. This is an uncharacterized protein from Schizosaccharomyces pombe (strain 972 / ATCC 24843) (Fission yeast).